Consider the following 238-residue polypeptide: Neuromodulin (238 aa).

Positions Met-1–Ala-238 are disordered. S-palmitoyl cysteine attachment occurs at residues Cys-3 and Cys-4. Over residues Lys-9–His-32 the composition is skewed to basic and acidic residues. Residues Ala-31–Gln-60 enclose the IQ domain. Position 41 is a phosphoserine; by PHK and PKC (Ser-41). Residues Glu-54 to Glu-83 show a composition bias toward basic and acidic residues. Residues Gly-84–Gly-95 are compositionally biased toward low complexity. Residues Lys-97 to Gly-116 show a composition bias toward basic and acidic residues. A compositionally biased stretch (low complexity) spans Ala-119–Ser-130. Over residues Glu-139–Ser-154 the composition is skewed to polar residues. Ser-151, Ser-153, and Ser-154 each carry phosphoserine. The segment covering Lys-155–Gln-167 has biased composition (basic and acidic residues). Residues Ala-168–Thr-199 are compositionally biased toward low complexity. Phosphothreonine is present on Thr-181. Ser-202 and Ser-203 each carry phosphoserine; by CK2. Over residues Asp-213–Glu-225 the composition is skewed to basic and acidic residues. Over residues Gly-226–Ala-238 the composition is skewed to acidic residues.

The protein belongs to the neuromodulin family. In terms of assembly, identified in a complex containing FGFR4, NCAM1, CDH2, PLCG1, FRS2, SRC, SHC1, GAP43 and CTTN. Interacts (via IQ domain) with calmodulin. Binds calmodulin with a greater affinity in the absence of Ca(2+) than in its presence. In terms of processing, phosphorylated. Phosphorylation of this protein by a protein kinase C is specifically correlated with certain forms of synaptic plasticity. Palmitoylated by ZDHHC3. Palmitoylation is regulated by ARF6 and is essential for plasma membrane association and axonal and dendritic filopodia induction. Deacylated by LYPLA2.

It is found in the cell membrane. The protein resides in the cell projection. It localises to the growth cone membrane. Its subcellular location is the synapse. The protein localises to the filopodium membrane. It is found in the perikaryon. The protein resides in the dendrite. It localises to the axon. Its subcellular location is the cytoplasm. This protein is associated with nerve growth. It is a major component of the motile 'growth cones' that form the tips of elongating axons. Plays a role in axonal and dendritic filopodia induction. The chain is Neuromodulin (GAP43) from Homo sapiens (Human).